Reading from the N-terminus, the 397-residue chain is Acetate kinase (397 aa).

Asn8 lines the Mg(2+) pocket. Residue Lys15 participates in ATP binding. Arg89 contributes to the substrate binding site. Asp146 serves as the catalytic Proton donor/acceptor. ATP is bound by residues 206–210, 281–283, and 329–333; these read HLGNG, DLR, and GVGEN. Glu382 contacts Mg(2+).

It belongs to the acetokinase family. In terms of assembly, homodimer. Mg(2+) is required as a cofactor. The cofactor is Mn(2+).

The protein resides in the cytoplasm. It carries out the reaction acetate + ATP = acetyl phosphate + ADP. It functions in the pathway metabolic intermediate biosynthesis; acetyl-CoA biosynthesis; acetyl-CoA from acetate: step 1/2. Its function is as follows. Catalyzes the formation of acetyl phosphate from acetate and ATP. Can also catalyze the reverse reaction. In Bacillus anthracis, this protein is Acetate kinase.